The chain runs to 91 residues: Glycophorin-B (91 aa).

Positions 1 to 19 (MYGKIIFVLLLSEIVSISA) are cleaved as a signal peptide. Residues 20-59 (LSTTEVAMHTSTSSSVTKSYISSQTNGETGQLVHRFTVPA) are Extracellular-facing. The O-linked (GalNAc...) threonine glycan is linked to Thr36. Ser38 is a glycosylation site (O-linked (GalNAc...) serine). The chain crosses the membrane as a helical span at residues 60–81 (PVVIILIILCVMAGIIGTILLI). Over 82–91 (SYSIRRLIKA) the chain is Cytoplasmic.

The protein belongs to the glycophorin-A family. As to quaternary structure, component of the ankyrin-1 complex in the erythrocyte, composed of ANK1, RHCE, RHAG, SLC4A1, EPB42, GYPA, GYPB and AQP1. Interacts (via the N-terminal) with RHAG; this interaction bridges the (RHAG)2(RHCE) heterotrimer with the SLC4A1 Band 3 I dimer complexed with GYPA. Post-translationally, the N-terminal extracellular domain is heavily glycosylated on serine and threonine residues.

It localises to the cell membrane. Functionally, component of the ankyrin-1 complex, a multiprotein complex involved in the stability and shape of the erythrocyte membrane. The sequence is that of Glycophorin-B from Homo sapiens (Human).